Here is a 280-residue protein sequence, read N- to C-terminus: Nitrogenase iron protein (280 aa).

9-16 (GKGGIGKS) lines the ATP pocket. Cys-97 lines the [4Fe-4S] cluster pocket. Residue Arg-100 is modified to ADP-ribosylarginine; by dinitrogenase reductase ADP-ribosyltransferase. Cys-132 lines the [4Fe-4S] cluster pocket.

It belongs to the NifH/BchL/ChlL family. As to quaternary structure, homodimer. Requires [4Fe-4S] cluster as cofactor. Post-translationally, the reversible ADP-ribosylation of Arg-100 inactivates the nitrogenase reductase and regulates nitrogenase activity.

It catalyses the reaction N2 + 8 reduced [2Fe-2S]-[ferredoxin] + 16 ATP + 16 H2O = H2 + 8 oxidized [2Fe-2S]-[ferredoxin] + 2 NH4(+) + 16 ADP + 16 phosphate + 6 H(+). Functionally, the key enzymatic reactions in nitrogen fixation are catalyzed by the nitrogenase complex, which has 2 components: the iron protein and the molybdenum-iron protein. The protein is Nitrogenase iron protein of Desulforudis audaxviator (strain MP104C).